The chain runs to 333 residues: tRNA U34 carboxymethyltransferase (333 aa).

Carboxy-S-adenosyl-L-methionine is bound by residues lysine 97, tryptophan 111, lysine 116, glycine 136, 158–160, 189–190, methionine 205, tyrosine 209, and arginine 324; these read DPS and IE.

The protein belongs to the class I-like SAM-binding methyltransferase superfamily. CmoB family. Homotetramer.

The enzyme catalyses carboxy-S-adenosyl-L-methionine + 5-hydroxyuridine(34) in tRNA = 5-carboxymethoxyuridine(34) in tRNA + S-adenosyl-L-homocysteine + H(+). Functionally, catalyzes carboxymethyl transfer from carboxy-S-adenosyl-L-methionine (Cx-SAM) to 5-hydroxyuridine (ho5U) to form 5-carboxymethoxyuridine (cmo5U) at position 34 in tRNAs. This Chromohalobacter salexigens (strain ATCC BAA-138 / DSM 3043 / CIP 106854 / NCIMB 13768 / 1H11) protein is tRNA U34 carboxymethyltransferase.